The sequence spans 450 residues: MREVISVHIGQGGIQVGNACWELFCLEHGIQPDGQMPSDKTIGGGDDAFNTFFSETGAGKHVPRAVLVDLEPTVCDEIRTGTYRQLFHPEQIISGKEDAANNFARGHYTIGKEIVDLVLDRIRKLADNCTGLQGFIGFHSVGGGTGSGLGSLLLERLSVDYGKKSKLCFTVYPSPQVSTAVVEPYNSVLSTHSLLEHTDVAVMLDNEAVYDICRRNLDIERPTYTNLNRLIAQVISSLTASLRFDGALNVDITEFQTNLVPYPRIHFMLSSYGPVISAEKAYHEQLSVAEITNSSFEPASMMAKCDPRHGKYMACCMMFRGDVVPKDVNAAVATIKTKRTIQFVDWSPGFKVGINYQPPTVVPGGDLAKVMRAVCMISNSTAIAEVFSRIDHKFDLMYAKRAFVHWYVGEGMEEGEFSEAREDLAALEKDYEEVGIETAEGEGEEEDMAQ.

A GTP-binding site is contributed by Gln11. Lys40 carries the N6-acetyllysine modification. GTP-binding residues include Glu71, Ser140, Gly144, Thr145, Thr179, Asn206, and Asn228. Position 71 (Glu71) interacts with Mg(2+). Residue Glu254 is part of the active site.

It belongs to the tubulin family. Dimer of alpha and beta chains. A typical microtubule is a hollow water-filled tube with an outer diameter of 25 nm and an inner diameter of 15 nM. Alpha-beta heterodimers associate head-to-tail to form protofilaments running lengthwise along the microtubule wall with the beta-tubulin subunit facing the microtubule plus end conferring a structural polarity. Microtubules usually have 13 protofilaments but different protofilament numbers can be found in some organisms and specialized cells. Mg(2+) is required as a cofactor. Acetylation of alpha chains at Lys-40 stabilizes microtubules and affects affinity and processivity of microtubule motors. This modification has a role in multiple cellular functions, ranging from cell motility, cell cycle progression or cell differentiation to intracellular trafficking and signaling.

The protein localises to the cytoplasm. It localises to the cytoskeleton. The enzyme catalyses GTP + H2O = GDP + phosphate + H(+). Its function is as follows. Tubulin is the major constituent of microtubules, a cylinder consisting of laterally associated linear protofilaments composed of alpha- and beta-tubulin heterodimers. Microtubules grow by the addition of GTP-tubulin dimers to the microtubule end, where a stabilizing cap forms. Below the cap, tubulin dimers are in GDP-bound state, owing to GTPase activity of alpha-tubulin. In Euplotes vannus (Marine ciliate), this protein is Tubulin alpha chain.